We begin with the raw amino-acid sequence, 130 residues long: Small ribosomal subunit protein bS6 (130 aa).

The disordered stretch occupies residues 100 to 130; that stretch reads SPMVKAKDERRERHDFASEANDDSEAGDSEE. Residues 104-116 are compositionally biased toward basic and acidic residues; sequence KAKDERRERHDFA. Residues 119–130 show a composition bias toward acidic residues; the sequence is ANDDSEAGDSEE.

The protein belongs to the bacterial ribosomal protein bS6 family.

In terms of biological role, binds together with bS18 to 16S ribosomal RNA. In Yersinia pestis (strain Pestoides F), this protein is Small ribosomal subunit protein bS6.